Reading from the N-terminus, the 106-residue chain is ATP-dependent Clp protease adapter protein ClpS (106 aa).

The protein belongs to the ClpS family. As to quaternary structure, binds to the N-terminal domain of the chaperone ClpA.

In terms of biological role, involved in the modulation of the specificity of the ClpAP-mediated ATP-dependent protein degradation. This is ATP-dependent Clp protease adapter protein ClpS from Vibrio cholerae serotype O1 (strain ATCC 39541 / Classical Ogawa 395 / O395).